The primary structure comprises 145 residues: Cytochrome b (145 aa).

Residues 38–58 (FFALHFLLPFVLAALVIMHLI) form a helical membrane-spanning segment. Positions 42 and 56 each coordinate heme b. His61 contributes to the a ubiquinone binding site. The helical transmembrane segment at 85–105 (FVFKDLVTVFIFFIVLSVFVF) threads the bilayer.

This sequence belongs to the cytochrome b family. Fungal cytochrome b-c1 complex contains 10 subunits; 3 respiratory subunits, 2 core proteins and 5 low-molecular weight proteins. Cytochrome b-c1 complex is a homodimer. It depends on heme b as a cofactor.

The protein resides in the mitochondrion inner membrane. In terms of biological role, component of the ubiquinol-cytochrome c reductase complex (complex III or cytochrome b-c1 complex) that is part of the mitochondrial respiratory chain. The b-c1 complex mediates electron transfer from ubiquinol to cytochrome c. Contributes to the generation of a proton gradient across the mitochondrial membrane that is then used for ATP synthesis. The protein is Cytochrome b (cob) of Aspergillus fumigatus (Neosartorya fumigata).